A 784-amino-acid chain; its full sequence is Probable aminopeptidase 1 (784 aa).

Residues Glu103 and 236–240 contribute to the substrate site; that span reads GAMEN. Residue His271 coordinates Zn(2+). Glu272 acts as the Proton acceptor in catalysis. His275 and Glu294 together coordinate Zn(2+).

Belongs to the peptidase M1 family. The cofactor is Zn(2+).

It localises to the cytoplasm. This Saccharolobus solfataricus (strain ATCC 35092 / DSM 1617 / JCM 11322 / P2) (Sulfolobus solfataricus) protein is Probable aminopeptidase 1 (ape1).